Consider the following 1101-residue polypeptide: Coiled-coil domain-containing protein 150 (1101 aa).

Coiled-coil stretches lie at residues 106–299, 398–680, 712–940, and 970–1033; these read RLES…DLTS, AAHA…KEDN, DSEI…NYEQ, and VRNK…EAHR. Positions 1055-1071 are enriched in basic and acidic residues; sequence SGEDRWQEKDQDVKHDV. Residues 1055-1101 are disordered; sequence SGEDRWQEKDQDVKHDVMSNQSVLHRWERKQNLRPMPKKYHSEVQRK.

This is Coiled-coil domain-containing protein 150 (CCDC150) from Homo sapiens (Human).